The primary structure comprises 447 residues: Tubulin beta-1 chain (447 aa).

Gln11 is a GTP binding site. Ser40 is subject to Phosphoserine. Residues Glu69, Ser138, Gly142, Thr143, Gly144, Asn204, and Asn226 each coordinate GTP. Glu69 serves as a coordination point for Mg(2+). The residue at position 339 (Ser339) is a Phosphoserine. Residues 427–447 form a disordered region; the sequence is EATADEDAEFEEEQEAEVDEN. The segment covering 429–447 has biased composition (acidic residues); that stretch reads TADEDAEFEEEQEAEVDEN.

It belongs to the tubulin family. Dimer of alpha and beta chains. A typical microtubule is a hollow water-filled tube with an outer diameter of 25 nm and an inner diameter of 15 nM. Alpha-beta heterodimers associate head-to-tail to form protofilaments running lengthwise along the microtubule wall with the beta-tubulin subunit facing the microtubule plus end conferring a structural polarity. Microtubules usually have 13 protofilaments but different protofilament numbers can be found in some organisms and specialized cells. Interacts with mgr and Vhl. It depends on Mg(2+) as a cofactor.

Its subcellular location is the cytoplasm. The protein localises to the cytoskeleton. Its function is as follows. Tubulin is the major constituent of microtubules, a cylinder consisting of laterally associated linear protofilaments composed of alpha- and beta-tubulin heterodimers. Microtubules grow by the addition of GTP-tubulin dimers to the microtubule end, where a stabilizing cap forms. Below the cap, tubulin dimers are in GDP-bound state, owing to GTPase activity of alpha-tubulin. This Drosophila melanogaster (Fruit fly) protein is Tubulin beta-1 chain (betaTub56D).